We begin with the raw amino-acid sequence, 567 residues long: Multidrug transporter TPO1_1 (567 aa).

A disordered region spans residues 1 to 71 (MVEEISPKYT…NRRMSRILTG (71 aa)). Asn120 carries N-linked (GlcNAc...) asparagine glycosylation. The next 12 helical transmembrane spans lie at 128–148 (IICIVLCLNCICISMGSSIFA), 157–177 (IYHVIPVVAILGVTLYVFGFA), 194–214 (GVLVISAFGFAVFQFAVATSK), 224–244 (FFGGLIGAAPMAVVPAAFADM), 253–273 (AICLFSLGVFVGPILSPVMGS), 283–303 (WLEYVTGCFASALFVAVALTF), 358–378 (PLLLIITIYNSFVYGILYLML), 396–416 (ELPYIALIIGMLVCTAFLWYF), 436–456 (LIPMVYAGVIFPIGILWFCWT), 471–491 (AGSFIGFGLMGIFLPCLNYII), 498–520 (AASAVAANTFMRSAFGAVFPLFA), and 531–551 (WAGLLLGLFAAALIPVPLFFL).

This sequence belongs to the major facilitator superfamily. DHA1 family. Polyamines/proton antiporter (TC 2.A.1.2.16) subfamily.

It is found in the cell membrane. Its function is as follows. Multidrug resistance transporter involved in resistance to azole antifungal drugs such as the imidazoles miconazole, ketoconazole, and tioconazole; as well as the triazoles itraconazole and fluconazole. Also plays a role in the resistance to other antifungal drug families such as the polyene amphotericin B, the pyrimide analog flucytosine, the fungicide mancozeb, and the polyamine spermine. Decreases the intracellular accumulation of clotrimazole by mediating its extrusion from cells. Involved in virulence by conferring resistance to the human antimicrobial peptide histatin-5. The chain is Multidrug transporter TPO1_1 from Candida glabrata (strain ATCC 2001 / BCRC 20586 / JCM 3761 / NBRC 0622 / NRRL Y-65 / CBS 138) (Yeast).